Reading from the N-terminus, the 585-residue chain is Formate--tetrahydrofolate ligase (585 aa).

Residue 65-72 participates in ATP binding; sequence TPHGEGKT.

Belongs to the formate--tetrahydrofolate ligase family.

The catalysed reaction is (6S)-5,6,7,8-tetrahydrofolate + formate + ATP = (6R)-10-formyltetrahydrofolate + ADP + phosphate. Its pathway is one-carbon metabolism; tetrahydrofolate interconversion. The chain is Formate--tetrahydrofolate ligase from Shewanella baltica (strain OS155 / ATCC BAA-1091).